Consider the following 497-residue polypeptide: Glycerol kinase (497 aa).

T11 provides a ligand contact to ADP. T11, S12, and S13 together coordinate ATP. A sn-glycerol 3-phosphate-binding site is contributed by T11. R15 contacts ADP. Positions 81, 82, 133, and 242 each coordinate sn-glycerol 3-phosphate. Positions 81, 82, 133, 242, and 243 each coordinate glycerol. T264 and G307 together coordinate ADP. ATP contacts are provided by T264, G307, Q311, and G412. ADP contacts are provided by G412 and N416.

The protein belongs to the FGGY kinase family.

It catalyses the reaction glycerol + ATP = sn-glycerol 3-phosphate + ADP + H(+). Its pathway is polyol metabolism; glycerol degradation via glycerol kinase pathway; sn-glycerol 3-phosphate from glycerol: step 1/1. Its activity is regulated as follows. Inhibited by fructose 1,6-bisphosphate (FBP). Functionally, key enzyme in the regulation of glycerol uptake and metabolism. Catalyzes the phosphorylation of glycerol to yield sn-glycerol 3-phosphate. The sequence is that of Glycerol kinase from Leptothrix cholodnii (strain ATCC 51168 / LMG 8142 / SP-6) (Leptothrix discophora (strain SP-6)).